A 331-amino-acid chain; its full sequence is Nucleoporin Nup35 (331 aa).

Disordered regions lie at residues 1–63 and 79–110; these read MEPM…HELN and AHTA…GLFD. 3 stretches are compositionally biased toward polar residues: residues 8–20, 35–56, and 84–104; these read SPVN…QTQY, HKNT…SPGG, and GANS…TGPP. In terms of domain architecture, RRM Nup35-type spans 187-268; sequence RLSDFWVTIF…SRCTDRSVID (82 aa).

Belongs to the Nup35 family. As to quaternary structure, interacts with Nup154.

It localises to the nucleus. Its subcellular location is the nuclear pore complex. In terms of biological role, functions as a component of the nuclear pore complex (NPC). May have a role in the organization of the inner nuclear membrane proteins at the nuclear envelope together with Nup154. This Drosophila melanogaster (Fruit fly) protein is Nucleoporin Nup35.